The sequence spans 382 residues: Ribosomal RNA large subunit methyltransferase G (382 aa).

Belongs to the methyltransferase superfamily. RlmG family.

The protein resides in the cytoplasm. The catalysed reaction is guanosine(1835) in 23S rRNA + S-adenosyl-L-methionine = N(2)-methylguanosine(1835) in 23S rRNA + S-adenosyl-L-homocysteine + H(+). Functionally, specifically methylates the guanine in position 1835 (m2G1835) of 23S rRNA. The protein is Ribosomal RNA large subunit methyltransferase G of Pseudoalteromonas translucida (strain TAC 125).